Reading from the N-terminus, the 22-residue chain is Conotoxin MIIIJ (22 aa).

At Q1 the chain carries Pyrrolidone carboxylic acid. 3 disulfide bridges follow: C3-C21, C4-C19, and C9-C22.

The protein belongs to the conotoxin M superfamily. As to expression, expressed by the venom duct.

Its subcellular location is the secreted. Its function is as follows. Probable competitive antagonist of fish muscle acetylcholine receptor. Inhibits postsynaptic nicotinic acetylcholine receptors (nAChRs) from fish (zebrafish and goldfish) and frogs (IC(50)=0.1 uM). Protects these receptors from block by alpha-bungarotoxin and alpha-conotoxin EI. Does not block nAChRs at the neuromuscular junction of Rana pipiens. Shows a weak inhibition on mammalian adult and fetal muscle nAChRs (alpha-1-beta-1-delta-epsilon/CHRNA1-CHRNB1-CHRND-CHRNE and alpha-1 beta-1 gamma delta/CHRNA1-CHRNB1-CHRNG-CHRND) (IC(50)=3-45 uM). In vivo, induces paralysis in goldfish (Carassius auratus) but not mice. The protein is Conotoxin MIIIJ of Conus magus (Magical cone).